A 263-amino-acid polypeptide reads, in one-letter code: MWELRSASFWRAIFAEFFATLFYVFFGLGASLRWAPGPLHVLQVALAFGLALATLVQAVGHISGAHVNPAVTFAFLVGSQMSLLRAICYMAAQLLGAVAGAAVLYSVTPAAVRGNLALNTLHPGVSLGQATTVEIFLTLQFVLCIFATYDERRNGRLGSVALAVGFSLTLGHLFGMYYTGAGMNPARSFAPAILTRNFTNHWVYWVGPIIGGGLASLLYDFLLFPRLKSVSERLSILKGARPSDSNGQPEGTGEPVELKTQAL.

The Cytoplasmic segment spans residues 1–9; it reads MWELRSASF. Residues 10 to 29 traverse the membrane as a helical segment; the sequence is WRAIFAEFFATLFYVFFGLG. The Extracellular portion of the chain corresponds to 30–41; the sequence is ASLRWAPGPLHV. A helical transmembrane segment spans residues 42–59; the sequence is LQVALAFGLALATLVQAV. Residues 60-61 are Cytoplasmic-facing; the sequence is GH. Positions 62–77 form an intramembrane region, discontinuously helical; the sequence is ISGAHVNPAVTFAFLV. The NPA 1 motif lies at 68–70; it reads NPA. At 78-82 the chain is on the cytoplasmic side; that stretch reads GSQMS. Residues 83–106 form a helical membrane-spanning segment; it reads LLRAICYMAAQLLGAVAGAAVLYS. Over 107–127 the chain is Extracellular; sequence VTPAAVRGNLALNTLHPGVSL. A helical transmembrane segment spans residues 128-148; that stretch reads GQATTVEIFLTLQFVLCIFAT. The Cytoplasmic segment spans residues 149-156; it reads YDERRNGR. Residues 157-175 traverse the membrane as a helical segment; the sequence is LGSVALAVGFSLTLGHLFG. Residues 176–178 are Extracellular-facing; the sequence is MYY. Positions 179–193 form an intramembrane region, discontinuously helical; it reads TGAGMNPARSFAPAI. The NPA 2 signature appears at 184–186; it reads NPA. Residues 194–200 are Extracellular-facing; sequence LTRNFTN. The helical transmembrane segment at 201-222 threads the bilayer; that stretch reads HWVYWVGPIIGGGLASLLYDFL. The Cytoplasmic segment spans residues 223–263; sequence LFPRLKSVSERLSILKGARPSDSNGQPEGTGEPVELKTQAL. An interaction with CALM region spans residues 227-237; that stretch reads LKSVSERLSIL. A phosphoserine mark is found at Ser235, Ser243, and Ser245. Residues 240 to 263 are disordered; sequence ARPSDSNGQPEGTGEPVELKTQAL. At Asn246 the chain carries Deamidated asparagine.

It belongs to the MIP/aquaporin (TC 1.A.8) family. Homotetramer; each monomer provides an independent water pore. Two homotetramers on opposing membranes can dimerize, forming a cell-cell junction. Interacts with CALM; the calcium-calmodulin/CALM complex interacts with the cytoplasmic domains of two aquaporins, leading to channel closure. Interacts with BFSP1 (via C-terminus); prevents calcium-dependent inhibition of the water channel activity. Post-translationally, subject to partial proteolytic cleavage in the eye lens core. Partial proteolysis promotes interactions between tetramers from adjoining membranes. Fatty acylated at Met-1 and Lys-238. The acyl modifications, in decreasing order of ion abundance, are: oleoyl (C18:1) &gt; palmitoyl (C16:0) &gt; stearoyl (C18:0) &gt; eicosenoyl (C20:1) &gt; dihomo-gamma-linolenoyl (C20:3) &gt; palmitoleoyl (C16:1) &gt; eicosadienoyl (C20:2).

It localises to the cell membrane. Its subcellular location is the cell junction. The enzyme catalyses H2O(in) = H2O(out). Its activity is regulated as follows. The water channel activity is inhibited by calcium through calmodulin/CALM. In terms of biological role, aquaporins form homotetrameric transmembrane channels, with each monomer independently mediating water transport across the plasma membrane along its osmotic gradient. Specifically expressed in lens fiber cells, this aquaporin is crucial for maintaining lens water homeostasis and transparency. Beyond water permeability, it also acts as a cell-to-cell adhesion molecule, forming thin junctions between lens fiber cells that are essential for maintaining the ordered structure and transparency of the lens. The sequence is that of Lens fiber major intrinsic protein from Oryctolagus cuniculus (Rabbit).